A 525-amino-acid polypeptide reads, in one-letter code: NGFI-A-binding protein 2 (525 aa).

The disordered stretch occupies residues 1–22; it reads MHRAPSPTAEQPPGGGDSARRT. S6 is modified (phosphoserine). The tract at residues 35-113 is NCD1; that stretch reads ALPRTLGELQ…REWATNPGLF (79 aa). The disordered stretch occupies residues 135–237; it reads GTRKGSMSNG…GGTGGGPDRL (103 aa). A phosphoserine mark is found at S157, S159, S162, and S171. Residues 212–234 show a composition bias toward gly residues; sequence AGGGVPEGTGAGGLAAGGTGGGP. The interval 267-356 is NCD2; it reads LLKLNKKLAR…SRQVARESTY (90 aa). The segment at 353–384 is necessary for nuclear localization; it reads ESTYLSSLKGSRLHPEELGGPPLKKLKQEVGE. K379 is covalently cross-linked (Glycyl lysine isopeptide (Lys-Gly) (interchain with G-Cter in SUMO1)). A disordered region spans residues 380–416; the sequence is QEVGEQSHPEIQQPPPGPESYVPPYRPSLEEDSASLS. S479 carries the phosphoserine modification. The interval 502-525 is disordered; that stretch reads PGPHPALVEGRRSSVKVEAEASRQ. Over residues 510–525 the composition is skewed to basic and acidic residues; the sequence is EGRRSSVKVEAEASRQ. Residue K517 forms a Glycyl lysine isopeptide (Lys-Gly) (interchain with G-Cter in SUMO1); alternate linkage. K517 is covalently cross-linked (Glycyl lysine isopeptide (Lys-Gly) (interchain with G-Cter in SUMO2); alternate).

It belongs to the NAB family. Homomultimers may associate with EGR1 bound to DNA. In terms of processing, sumoylation by EGR2 represses EGR2 transcriptional activity in hindbrain. As to expression, widely expressed at low levels. Highly expressed in melanoma cell lines.

The protein resides in the nucleus. Functionally, acts as a transcriptional repressor for zinc finger transcription factors EGR1 and EGR2. Isoform 2 lacks repression ability. This is NGFI-A-binding protein 2 (NAB2) from Homo sapiens (Human).